The following is a 149-amino-acid chain: Secreted RxLR effector protein 3 (149 aa).

Positions 1 to 23 (MRASTILFVLGAAILAVIGVTTA) are cleaved as a signal peptide. The RxLR-dEER signature appears at 38–53 (RLLRSGSMEQEPDEER).

It belongs to the RxLR effector family.

Its subcellular location is the secreted. The protein localises to the host nucleus. It localises to the host cytoplasm. In terms of biological role, secreted effector that completely suppresses the host cell death induced by cell death-inducing proteins. This is Secreted RxLR effector protein 3 from Plasmopara viticola (Downy mildew of grapevine).